A 246-amino-acid polypeptide reads, in one-letter code: Transmembrane and ubiquitin-like domain-containing protein 1 (246 aa).

The segment at 2 to 30 is required to release iHOPS from membranes; that stretch reads TLIEGVGDEVTVLFSVLACLLVLALAWVS. A helical transmembrane segment spans residues 11–31; that stretch reads VTVLFSVLACLLVLALAWVST. The segment at 34–101 is disordered; it reads AEGGDPLPQP…TPPAPDSPQE (68 aa). Residues 40-50 show a composition bias toward pro residues; it reads LPQPSGTPTPS. At Thr-71 the chain carries Phosphothreonine. Ser-73 is subject to Phosphoserine. At Thr-92 the chain carries Phosphothreonine. A phosphoserine mark is found at Ser-98 and Ser-127. The Ubiquitin-like domain occupies 103–176; that stretch reads LVLRLKFLND…LHCHVSTRVG (74 aa). 2 consecutive transmembrane segments (helical) span residues 195–215 and 221–241; these read IGSLLLPLLLLLLLLLWYCQI and FPLTATLGLAGFTLLLSLLAF.

In terms of assembly, interacts with EEF1A1, GRIA2, GRIP1, CAMLG, TUBG1. Interacts with NPM1 and CDKN2A; TMUB1 can enhance interaction between NPM1 and CDKN2A and is proposed to bridge the proteins; proposed to be mediated by iHOPS. Interacts with ERLIN2 and AMFR; TMUB1 promotes the interaction of ERLIN2 with AMFR. Processed by regulated intramembrane proteolysis (RIP)in the N-terminus to release iHOPS from membranes. In terms of tissue distribution, ubiquitously expressed with highest levels in mammary and thyroid glands, bone marrow and spleen; limited expression in cardiac, pancreatic and ovarian tissues.

It is found in the membrane. Its subcellular location is the postsynaptic cell membrane. The protein resides in the recycling endosome. The protein localises to the cytoplasm. It localises to the nucleus. It is found in the nucleolus. Its subcellular location is the cytoskeleton. The protein resides in the microtubule organizing center. The protein localises to the centrosome. Involved in sterol-regulated ubiquitination and degradation of HMG-CoA reductase HMGCR. Involved in positive regulation of AMPA-selective glutamate receptor GRIA2 recycling to the cell surface. Acts as a negative regulator of hepatocyte growth during regeneration. Its function is as follows. May contribute to the regulation of translation during cell-cycle progression. May contribute to the regulation of cell proliferation. May be involved in centrosome assembly. Modulates stabilization and nucleolar localization of tumor suppressor CDKN2A and enhances association between CDKN2A and NPM1. The sequence is that of Transmembrane and ubiquitin-like domain-containing protein 1 (TMUB1) from Homo sapiens (Human).